The primary structure comprises 213 residues: MNFTRIDLNTWNRREHFALYRQQIKCGFSLTTKLDITALRTALAETGYKFYPLMIYLISRAVNQFPEFRMALKDNELIYWDQSDPVFTVFHKETETFSALSCRYFPDLSEFMAGYNAVTAEYQHDTRLFPQGNLPENHLNISSLPWVSFDGFNLNITGNDDYFAPVFTMAKFQQEGDRVLLPVSVQVHHAVCDGFHAARFINTLQLMCDNILK.

The active-site Proton acceptor is the histidine 189.

It belongs to the chloramphenicol acetyltransferase family. Homotrimer.

The catalysed reaction is chloramphenicol + acetyl-CoA = chloramphenicol 3-acetate + CoA. Its function is as follows. This enzyme is an effector of chloramphenicol resistance in bacteria. This is Chloramphenicol acetyltransferase 2 (cmlA) from Escherichia coli.